Reading from the N-terminus, the 445-residue chain is Phosphoglucosamine mutase (445 aa).

The Phosphoserine intermediate role is filled by Ser-104. Mg(2+) is bound by residues Ser-104, Asp-243, Asp-245, and Asp-247. Ser-104 is subject to Phosphoserine.

This sequence belongs to the phosphohexose mutase family. Requires Mg(2+) as cofactor. Post-translationally, activated by phosphorylation.

It catalyses the reaction alpha-D-glucosamine 1-phosphate = D-glucosamine 6-phosphate. Functionally, catalyzes the conversion of glucosamine-6-phosphate to glucosamine-1-phosphate. The chain is Phosphoglucosamine mutase from Neisseria subflava.